Consider the following 336-residue polypeptide: Casein kinase II subunit alpha (336 aa).

Residues 37-322 (YQLVRKLGRG…AREAMAHPYF (286 aa)) form the Protein kinase domain. ATP is bound by residues 43-51 (LGRGKYSEV) and lysine 66. The active-site Proton acceptor is the aspartate 154.

The protein belongs to the protein kinase superfamily. Ser/Thr protein kinase family. CK2 subfamily. Tetramer of two alpha and two beta chains. Requires Mg(2+) as cofactor.

It localises to the nucleus. Its subcellular location is the nucleolus. It catalyses the reaction L-seryl-[protein] + ATP = O-phospho-L-seryl-[protein] + ADP + H(+). The enzyme catalyses L-threonyl-[protein] + ATP = O-phospho-L-threonyl-[protein] + ADP + H(+). Functionally, casein kinases are operationally defined by their preferential utilization of acidic proteins such as caseins as substrates. The alpha chain contains the catalytic site. May participate in Wnt signaling. The chain is Casein kinase II subunit alpha (CkIIalpha) from Drosophila melanogaster (Fruit fly).